The sequence spans 331 residues: High-affinity nickel-transport protein NixA (331 aa).

The next 7 membrane-spanning stretches (helical) occupy residues 3–23, 77–97, 110–130, 184–204, 213–233, 259–279, and 302–322; these read LWFPYFLAIVFLHALGLALLF, MGHSSVVILMTIISAFAIAWA, VVGTLVSGLFLLIIGLLNAII, PVGFLFGLGFDTASEIALLAL, VVGMLSLPILFAAGMSLFDTL, ITALSVFIALFIGLIELFQVI, and DLGYYLVGLFVIAFLGSFFLW.

Belongs to the NiCoT transporter (TC 2.A.52) family.

It is found in the cell inner membrane. High-affinity nickel intake protein. Imports nickel ions in an energy-dependent fashion. Necessary for the expression of catalytically active urease. This Helicobacter pylori (strain J99 / ATCC 700824) (Campylobacter pylori J99) protein is High-affinity nickel-transport protein NixA (nixA).